The chain runs to 78 residues: Large ribosomal subunit protein bL28 (78 aa).

The disordered stretch occupies residues 1-21 (MSRVCQVTGKRPMVGNNRSHA).

Belongs to the bacterial ribosomal protein bL28 family.

The chain is Large ribosomal subunit protein bL28 from Shewanella halifaxensis (strain HAW-EB4).